We begin with the raw amino-acid sequence, 231 residues long: Cysteine-rich venom protein VAR10 (231 aa).

Residues 1 to 19 (MILLKLYLTLAAILCQSRG) form the signal peptide. The region spanning 41 to 169 (NKHNDLRRTV…SLKYFQVCQY (129 aa)) is the SCP domain. Cystine bridges form between Cys77/Cys156, Cys95/Cys170, Cys151/Cys167, Cys189/Cys196, and Cys214/Cys231. Positions 205 to 231 (CAYNDDYTSCPDLTKQVGCHHPVTANC) constitute a ShKT domain.

It belongs to the CRISP family. Contains 8 disulfide bonds. Expressed by the venom gland.

It localises to the secreted. Its function is as follows. Blocks ryanodine receptors, and potassium channels. The polypeptide is Cysteine-rich venom protein VAR10 (Varanus varius (Lace monitor lizard)).